The following is a 280-amino-acid chain: Golgi phosphoprotein 3-like B (280 aa).

The segment at 1–32 (MTTLIRRGRRAEEGQERRADSEDSIKDKDEED) is disordered. Residues 10–32 (RAEEGQERRADSEDSIKDKDEED) are compositionally biased toward basic and acidic residues. Residues tryptophan 62, arginine 71, arginine 152, and arginine 155 each contribute to the a 1,2-diacyl-sn-glycero-3-phospho-(1D-myo-inositol 4-phosphate) site. The interval 171-182 (EKQNFLLFDMTT) is beta-hairpin required for oligomerization.

This sequence belongs to the GOLPH3/VPS74 family. Homooligomer.

It is found in the golgi apparatus. It localises to the golgi stack membrane. The protein resides in the trans-Golgi network membrane. Its function is as follows. Phosphatidylinositol-4-phosphate-binding protein that may play a role in the process of vesicle budding at the Golgi and anterograde transport to the plasma membrane. In Xenopus laevis (African clawed frog), this protein is Golgi phosphoprotein 3-like B (golph3l-b).